Reading from the N-terminus, the 268-residue chain is Undecaprenyl-diphosphatase (268 aa).

7 consecutive transmembrane segments (helical) span residues 5 to 25, 43 to 63, 84 to 104, 107 to 127, 184 to 204, 213 to 233, and 248 to 268; these read SIIS…IPVS, GNTF…LVYF, FSVL…HGFI, VLFE…IILY, AAEF…ALDL, FDDV…GIFV, and PFAI…WLLG.

This sequence belongs to the UppP family.

The protein localises to the cell inner membrane. The enzyme catalyses di-trans,octa-cis-undecaprenyl diphosphate + H2O = di-trans,octa-cis-undecaprenyl phosphate + phosphate + H(+). Functionally, catalyzes the dephosphorylation of undecaprenyl diphosphate (UPP). Confers resistance to bacitracin. The polypeptide is Undecaprenyl-diphosphatase (Rhizobium meliloti (strain 1021) (Ensifer meliloti)).